The primary structure comprises 178 residues: Adenine phosphoribosyltransferase (178 aa).

It belongs to the purine/pyrimidine phosphoribosyltransferase family. As to quaternary structure, homodimer.

The protein localises to the cytoplasm. It catalyses the reaction AMP + diphosphate = 5-phospho-alpha-D-ribose 1-diphosphate + adenine. It functions in the pathway purine metabolism; AMP biosynthesis via salvage pathway; AMP from adenine: step 1/1. Catalyzes a salvage reaction resulting in the formation of AMP, that is energically less costly than de novo synthesis. The sequence is that of Adenine phosphoribosyltransferase from Bacteroides fragilis (strain YCH46).